A 214-amino-acid chain; its full sequence is Zinc finger protein 11 (214 aa).

Positions 1 to 27 (MKRTHLASFSNRDKTQEEEGEDGNGDN) are disordered. The segment at 49 to 71 (YTCSFCRREFRSAQALGGHMNVH) adopts a C2H2-type zinc-finger fold. The Nuclear localization signal signature appears at 72–79 (RRDRAKLR). The interval 89–130 (HHHTPIANPNPNFSSSSSSSTTTAHLEPSLTNQRSKTTPFPS) is disordered. The segment covering 102-111 (SSSSSSSTTT) has biased composition (low complexity). Positions 117 to 128 (SLTNQRSKTTPF) are enriched in polar residues.

Expressed in roots, stems, axillary buds and flowers.

It is found in the nucleus. Its function is as follows. Probable transcription factor that may regulate cell division and growth. In Arabidopsis thaliana (Mouse-ear cress), this protein is Zinc finger protein 11.